A 100-amino-acid chain; its full sequence is MANVVDPRDIILSPVISEKSYGLIEDNVYTFIVHPDSNKTQIKIAIEKIFKVKVDSVNTANRPGKRKRTRTGYGQRKATKRAIVTLAAGSKPIDLFGAPA.

This sequence belongs to the universal ribosomal protein uL23 family. As to quaternary structure, part of the 50S ribosomal subunit. Contacts protein L29, and trigger factor when it is bound to the ribosome.

Its function is as follows. One of the early assembly proteins it binds 23S rRNA. One of the proteins that surrounds the polypeptide exit tunnel on the outside of the ribosome. Forms the main docking site for trigger factor binding to the ribosome. The chain is Large ribosomal subunit protein uL23 from Mycolicibacterium gilvum (strain PYR-GCK) (Mycobacterium gilvum (strain PYR-GCK)).